The chain runs to 511 residues: Probable cytosol aminopeptidase (511 aa).

Residues lysine 255 and aspartate 260 each coordinate Mn(2+). Lysine 267 is an active-site residue. Mn(2+) is bound by residues aspartate 278, aspartate 337, and glutamate 339. Residue arginine 341 is part of the active site. Residues 485 to 511 are disordered; the sequence is GAAQAVSPKKAARKEPGAAARKARSAQ.

It belongs to the peptidase M17 family. Mn(2+) is required as a cofactor.

The protein resides in the cytoplasm. The catalysed reaction is Release of an N-terminal amino acid, Xaa-|-Yaa-, in which Xaa is preferably Leu, but may be other amino acids including Pro although not Arg or Lys, and Yaa may be Pro. Amino acid amides and methyl esters are also readily hydrolyzed, but rates on arylamides are exceedingly low.. The enzyme catalyses Release of an N-terminal amino acid, preferentially leucine, but not glutamic or aspartic acids.. Presumably involved in the processing and regular turnover of intracellular proteins. Catalyzes the removal of unsubstituted N-terminal amino acids from various peptides. The protein is Probable cytosol aminopeptidase of Variovorax paradoxus (strain S110).